Reading from the N-terminus, the 237-residue chain is tRNA (guanine-N(7)-)-methyltransferase (237 aa).

Residues glutamate 68, glutamate 93, aspartate 120, and aspartate 143 each coordinate S-adenosyl-L-methionine. Residue aspartate 143 is part of the active site. Residues lysine 147, aspartate 179, and 216 to 219 (TKFE) each bind substrate.

This sequence belongs to the class I-like SAM-binding methyltransferase superfamily. TrmB family.

The enzyme catalyses guanosine(46) in tRNA + S-adenosyl-L-methionine = N(7)-methylguanosine(46) in tRNA + S-adenosyl-L-homocysteine. The protein operates within tRNA modification; N(7)-methylguanine-tRNA biosynthesis. Catalyzes the formation of N(7)-methylguanine at position 46 (m7G46) in tRNA. In Shewanella pealeana (strain ATCC 700345 / ANG-SQ1), this protein is tRNA (guanine-N(7)-)-methyltransferase.